Here is a 193-residue protein sequence, read N- to C-terminus: Probable gluconokinase (193 aa).

An ATP-binding site is contributed by 21-28 (GPAGSGKT).

The protein belongs to the gluconokinase GntK/GntV family.

The catalysed reaction is D-gluconate + ATP = 6-phospho-D-gluconate + ADP + H(+). The protein operates within carbohydrate acid metabolism; D-gluconate degradation. The chain is Probable gluconokinase from Schizosaccharomyces pombe (strain 972 / ATCC 24843) (Fission yeast).